The sequence spans 187 residues: Threonylcarbamoyl-AMP synthase (187 aa).

The YrdC-like domain maps to 4 to 187; the sequence is QSTIAAAITC…DAMNGKVFRG (184 aa).

Belongs to the SUA5 family. TsaC subfamily.

It is found in the cytoplasm. It catalyses the reaction L-threonine + hydrogencarbonate + ATP = L-threonylcarbamoyladenylate + diphosphate + H2O. Its function is as follows. Required for the formation of a threonylcarbamoyl group on adenosine at position 37 (t(6)A37) in tRNAs that read codons beginning with adenine. Catalyzes the conversion of L-threonine, HCO(3)(-)/CO(2) and ATP to give threonylcarbamoyl-AMP (TC-AMP) as the acyladenylate intermediate, with the release of diphosphate. The protein is Threonylcarbamoyl-AMP synthase of Pseudoalteromonas translucida (strain TAC 125).